Consider the following 222-residue polypeptide: Large ribosomal subunit protein uL1 (222 aa).

It belongs to the universal ribosomal protein uL1 family. In terms of assembly, part of the 50S ribosomal subunit.

Binds directly to 23S rRNA. Probably involved in E site tRNA release. In terms of biological role, protein L1 is also a translational repressor protein, it controls the translation of its operon by binding to its mRNA. The sequence is that of Large ribosomal subunit protein uL1 from Pyrobaculum aerophilum (strain ATCC 51768 / DSM 7523 / JCM 9630 / CIP 104966 / NBRC 100827 / IM2).